The following is a 341-amino-acid chain: UDP-N-acetylenolpyruvoylglucosamine reductase (341 aa).

An FAD-binding PCMH-type domain is found at Phe13–Ala185. Residue Arg161 is part of the active site. Residue Ser231 is the Proton donor of the active site. Glu327 is an active-site residue.

This sequence belongs to the MurB family. FAD serves as cofactor.

The protein localises to the cytoplasm. The catalysed reaction is UDP-N-acetyl-alpha-D-muramate + NADP(+) = UDP-N-acetyl-3-O-(1-carboxyvinyl)-alpha-D-glucosamine + NADPH + H(+). It participates in cell wall biogenesis; peptidoglycan biosynthesis. Functionally, cell wall formation. The sequence is that of UDP-N-acetylenolpyruvoylglucosamine reductase from Shewanella sp. (strain MR-4).